Here is a 424-residue protein sequence, read N- to C-terminus: Hemagglutinin-esterase (424 aa).

The signal sequence occupies residues 1–16; the sequence is MFLLPRFVLVSCIIGS. An esterase domain 1 region spans residues 7–127; the sequence is FVLVSCIIGS…SNDIWMQNKG (121 aa). Residues 17 to 392 are Virion surface-facing; sequence LGFDNPPTNV…PICVYDPLPI (376 aa). The active-site Nucleophile is Ser40. Cys44 and Cys65 are disulfide-bonded. Asn54, Asn89, Asn153, Asn236, and Asn301 each carry an N-linked (GlcNAc...) asparagine; by host glycan. 3 disulfide bridges follow: Cys113/Cys162, Cys197/Cys276, and Cys205/Cys249. The interval 128–266 is receptor binding; sequence LFYTQVYKNM…GNYLAISNEL (139 aa). The interval 267–379 is esterase domain 2; the sequence is LLTVPTKAIC…RCPTAADINT (113 aa). Residues Cys307 and Cys312 are joined by a disulfide bond. Asn316 is a glycosylation site (N-linked (GlcNAc...) asparagine; by host). Residues Asp326 and His329 each act as charge relay system in the active site. Cysteines 347 and 371 form a disulfide. The N-linked (GlcNAc...) asparagine; by host glycan is linked to Asn358. The chain crosses the membrane as a helical span at residues 393-413; it reads ILLGILLGVAVIIIVVLLLYF. Residues 414 to 424 lie on the Intravirion side of the membrane; sequence MVDNGTRLHDA. N-linked (GlcNAc...) asparagine; by host glycosylation is present at Asn417.

Belongs to the influenza type C/coronaviruses hemagglutinin-esterase family. Homodimer; disulfide-linked. Forms a complex with the M protein in the pre-Golgi. Associates then with S-M complex to form a ternary complex S-M-HE. N-glycosylated in the host RER.

The protein localises to the virion membrane. Its subcellular location is the host cell membrane. The enzyme catalyses N-acetyl-9-O-acetylneuraminate + H2O = N-acetylneuraminate + acetate + H(+). It catalyses the reaction N-acetyl-4-O-acetylneuraminate + H2O = N-acetylneuraminate + acetate + H(+). Functionally, structural protein that makes short spikes at the surface of the virus. Contains receptor binding and receptor-destroying activities. Mediates de-O-acetylation of N-acetyl-4-O-acetylneuraminic acid, which is probably the receptor determinant recognized by the virus on the surface of erythrocytes and susceptible cells. This receptor-destroying activity is important for virus release as it probably helps preventing self-aggregation and ensures the efficient spread of the progeny virus from cell to cell. May serve as a secondary viral attachment protein for initiating infection, the spike protein being the major one. May become a target for both the humoral and the cellular branches of the immune system. The protein is Hemagglutinin-esterase of Bovine coronavirus (strain 98TXSF-110-LUN) (BCoV-LUN).